A 444-amino-acid chain; its full sequence is UDP-N-acetylmuramate--L-alanine ligase (444 aa).

Position 111 to 117 (111 to 117) interacts with ATP; sequence GAHGKTS.

It belongs to the MurCDEF family.

The protein resides in the cytoplasm. It carries out the reaction UDP-N-acetyl-alpha-D-muramate + L-alanine + ATP = UDP-N-acetyl-alpha-D-muramoyl-L-alanine + ADP + phosphate + H(+). Its pathway is cell wall biogenesis; peptidoglycan biosynthesis. In terms of biological role, cell wall formation. In Leuconostoc citreum (strain KM20), this protein is UDP-N-acetylmuramate--L-alanine ligase.